A 323-amino-acid polypeptide reads, in one-letter code: L-lactate dehydrogenase (323 aa).

NAD(+)-binding positions include V16, N37, and 81-82 (GA). Substrate contacts are provided by residues Q84, R90, and 122–125 (NPVD). Residues 120 to 122 (ATN) and S145 contribute to the NAD(+) site. 150–153 (DSAR) serves as a coordination point for substrate. H177 acts as the Proton acceptor in catalysis. Y221 is subject to Phosphotyrosine. T230 lines the substrate pocket.

The protein belongs to the LDH/MDH superfamily. LDH family. Homotetramer.

It localises to the cytoplasm. It carries out the reaction (S)-lactate + NAD(+) = pyruvate + NADH + H(+). It participates in fermentation; pyruvate fermentation to lactate; (S)-lactate from pyruvate: step 1/1. In terms of biological role, catalyzes the conversion of lactate to pyruvate. In Limosilactobacillus reuteri (Lactobacillus reuteri), this protein is L-lactate dehydrogenase.